The primary structure comprises 125 residues: Holo-[acyl-carrier-protein] synthase (125 aa).

Asp-8 and Glu-57 together coordinate Mg(2+).

The protein belongs to the P-Pant transferase superfamily. AcpS family. Requires Mg(2+) as cofactor.

It is found in the cytoplasm. The catalysed reaction is apo-[ACP] + CoA = holo-[ACP] + adenosine 3',5'-bisphosphate + H(+). In terms of biological role, transfers the 4'-phosphopantetheine moiety from coenzyme A to a Ser of acyl-carrier-protein. This Neisseria gonorrhoeae (strain ATCC 700825 / FA 1090) protein is Holo-[acyl-carrier-protein] synthase.